We begin with the raw amino-acid sequence, 109 residues long: Putative membrane protein insertion efficiency factor (109 aa).

This sequence belongs to the UPF0161 family.

It localises to the cell inner membrane. Its function is as follows. Could be involved in insertion of integral membrane proteins into the membrane. This Rhodopseudomonas palustris (strain BisB18) protein is Putative membrane protein insertion efficiency factor.